We begin with the raw amino-acid sequence, 440 residues long: Tumor necrosis factor receptor superfamily member 10B (440 aa).

Disordered stretches follow at residues 1 to 32 (MEQRGQNAPAASGARKRHGPGPREARGARPGP) and 60 to 84 (DLAPQQRAAPQQKRSSPSEGLCPPG). Positions 1–55 (MEQRGQNAPAASGARKRHGPGPREARGARPGPRVPKTLVLVVAAVLLLVSAESAL) are cleaved as a signal peptide. Over 56–210 (ITQQDLAPQQ…SPGTPASPCS (155 aa)) the chain is Extracellular. 3 TNFR-Cys repeats span residues 57–94 (TQQDLAPQQRAAPQQKRSSPSEGLCPPGHHISEDGRDC), 97–137 (CKYG…NTVC), and 138–178 (QCEE…DIEC). Positions 60-71 (DLAPQQRAAPQQ) are enriched in low complexity. Intrachain disulfides connect Cys81–Cys94, Cys97–Cys113, Cys116–Cys129, Cys119–Cys137, Cys139–Cys153, Cys156–Cys170, and Cys160–Cys178. A TAPE repeat occupies 192–206 (PAVEETVTSSPGTPA). Residues 211 to 231 (LSGIIIGVTVAAVVLIVAVFV) form a helical membrane-spanning segment. Topologically, residues 232-440 (CKSLLWKKVL…LEGNADSAMS (209 aa)) are cytoplasmic. The Death domain maps to 339 to 422 (RQCFDDFADL…LAKQKIEDHL (84 aa)).

Monomer. Can interact with TRADD and RIPK1. Interacts with HCMV protein UL141; this interaction prevents TNFRSF10B cell surface expression. Two TNFRSF10B monomers interact with a UL141 homodimer. Three TNFRSF10B molecules interact with TNFSF10 homotrimer. In the absence of stimulation, interacts with BIRC2, DDX3X and GSK3B. The interaction with BIRC2 and DDX3X is further enhanced upon receptor stimulation and accompanied by DDX3X and BIRC2 cleavage. In terms of processing, (Microbial infection) Glycosylated on Arg residue by S.typhimurium protein Ssek3. As to expression, widely expressed in adult and fetal tissues; very highly expressed in tumor cell lines such as HeLaS3, K-562, HL-60, SW480, A-549 and G-361; highly expressed in heart, peripheral blood lymphocytes, liver, pancreas, spleen, thymus, prostate, ovary, uterus, placenta, testis, esophagus, stomach and throughout the intestinal tract; not detectable in brain.

It is found in the membrane. In terms of biological role, receptor for the cytotoxic ligand TNFSF10/TRAIL. The adapter molecule FADD recruits caspase-8 to the activated receptor. The resulting death-inducing signaling complex (DISC) performs caspase-8 proteolytic activation which initiates the subsequent cascade of caspases (aspartate-specific cysteine proteases) mediating apoptosis. Promotes the activation of NF-kappa-B. Essential for ER stress-induced apoptosis. The protein is Tumor necrosis factor receptor superfamily member 10B (TNFRSF10B) of Homo sapiens (Human).